The sequence spans 360 residues: UDP-N-acetylglucosamine--N-acetylmuramyl-(pentapeptide) pyrophosphoryl-undecaprenol N-acetylglucosamine transferase (360 aa).

Positions 198 and 289 each coordinate UDP-N-acetyl-alpha-D-glucosamine.

Belongs to the glycosyltransferase 28 family. MurG subfamily.

It is found in the cell membrane. The catalysed reaction is Mur2Ac(oyl-L-Ala-gamma-D-Glu-L-Lys-D-Ala-D-Ala)-di-trans,octa-cis-undecaprenyl diphosphate + UDP-N-acetyl-alpha-D-glucosamine = beta-D-GlcNAc-(1-&gt;4)-Mur2Ac(oyl-L-Ala-gamma-D-Glu-L-Lys-D-Ala-D-Ala)-di-trans,octa-cis-undecaprenyl diphosphate + UDP + H(+). Its pathway is cell wall biogenesis; peptidoglycan biosynthesis. In terms of biological role, cell wall formation. Catalyzes the transfer of a GlcNAc subunit on undecaprenyl-pyrophosphoryl-MurNAc-pentapeptide (lipid intermediate I) to form undecaprenyl-pyrophosphoryl-MurNAc-(pentapeptide)GlcNAc (lipid intermediate II). The protein is UDP-N-acetylglucosamine--N-acetylmuramyl-(pentapeptide) pyrophosphoryl-undecaprenol N-acetylglucosamine transferase of Streptococcus pyogenes serotype M6 (strain ATCC BAA-946 / MGAS10394).